The chain runs to 559 residues: 5-epiaristolochene synthase (559 aa).

Residues aspartate 312, aspartate 316, aspartate 455, threonine 459, and glutamate 463 each contribute to the Mg(2+) site. The DDXXD motif signature appears at 312 to 316 (DDTYD).

It belongs to the terpene synthase family. Monomer. Requires Mg(2+) as cofactor. Expressed only in treated leaves an not detected in control leaves.

It localises to the cytoplasm. The enzyme catalyses (2E,6E)-farnesyl diphosphate = (+)-5-epi-aristolochene + diphosphate. The protein operates within secondary metabolite biosynthesis; terpenoid biosynthesis. Its function is as follows. Catalyzes the cyclization of trans,trans-farnesyl diphosphate (FPP) to the bicyclic intermediate 5-epi-aristolochene, initial step in the conversion of FPP to the sesquiterpenoid antifungal phytoalexin capsidiol. Produces germacrene A as an enzyme-bound intermediate that is not released by the enzyme, but is further cyclized to produce the bicyclic 5-epi-aristolochene. In Capsicum annuum (Capsicum pepper), this protein is 5-epiaristolochene synthase (EAS).